A 317-amino-acid chain; its full sequence is MGYDVTRFQGDVDEDLICPICSGVLEEPVQAPHCEHAFCNACITQWFSQQQTCPVDRSVVTVAHLRPVPRIMRNMLSKLQIACDNAVFGCSAVVRLDNLMSHLSDCEHNPKRPVTCEQGCGLEMPKDELPNHNCIKHLRSVVQQQQTRIAELEKTSAEHKHQLAEQKRDIQLLKAYMRAIRSVNPNLQNLEETIEYNEILEWVNSLQPARVTRWGGMISTPDAVLQAVIKRSLVESGCPASIVNELIENAHERSWPQGLATLETRQMNRRYYENYVAKRIPGKQAVVVMACENQHMGDDMVQEPGLVMIFAHGVEEI.

The RING-type; degenerate zinc finger occupies 18 to 57 (CPICSGVLEEPVQAPHCEHAFCNACITQWFSQQQTCPVDR). Residues 78-138 (KLQIACDNAV…LPNHNCIKHL (61 aa)) form an SIAH-type; degenerate zinc finger.

In terms of assembly, interacts with USP8, ERBB3, PRKN and BIRC6. Interacts with CSF2RB, EPOR, IL3RA, MYD88 and TBK1. Interacts with CLEC16A. In terms of processing, autoubiquitinated. Autoubiquitination leads to proteasomal degradation. Deubiquitinated by USP8 to get stabilized which induces apoptosis. In terms of tissue distribution, detected in ovary, testis and prostate.

It carries out the reaction S-ubiquitinyl-[E2 ubiquitin-conjugating enzyme]-L-cysteine + [acceptor protein]-L-lysine = [E2 ubiquitin-conjugating enzyme]-L-cysteine + N(6)-ubiquitinyl-[acceptor protein]-L-lysine.. It participates in protein modification; protein ubiquitination. Acts as E3 ubiquitin-protein ligase and regulates the degradation of target proteins. Polyubiquitinates MYD88. Negatively regulates MYD88-dependent production of pro-inflammatory cytokines. Can promote TRIF-dependent production of type I interferon and inhibits infection with vesicular stomatitis virus. Promotes also activation of TBK1 and IRF3. Involved in the ubiquitination of erythropoietin (EPO) and interleukin-3 (IL-3) receptors. Thus, through maintaining basal levels of cytokine receptors, RNF41 is involved in the control of hematopoietic progenitor cell differentiation into myeloerythroid lineages. Contributes to the maintenance of steady-state ERBB3 levels by mediating its growth factor-independent degradation. Involved in the degradation of the inhibitor of apoptosis BIRC6 and thus is an important regulator of cell death by promoting apoptosis. Also acts as a PRKN modifier that accelerates its degradation, resulting in a reduction of PRKN activity, influencing the balance of intracellular redox state. The RNF41-PRKN pathway regulates autophagosome-lysosome fusion during late mitophagy. Mitophagy is a selective form of autophagy necessary for mitochondrial quality control. This chain is E3 ubiquitin-protein ligase NRDP1 (RNF41), found in Homo sapiens (Human).